The primary structure comprises 231 residues: Protoporphyrinogen IX dehydrogenase [quinone] (231 aa).

One can recognise a Flavodoxin-like domain in the interval 8–178 (CLMLYSTTDG…AVRRFASDFA (171 aa)). Residues 14–18 (TTDGH) and 90–158 (FFSV…ETDS) contribute to the FMN site. A helical membrane pass occupies residues 208–228 (CLLAIVGMSAAVIVGIRIIAA).

It belongs to the HemG family. It depends on FMN as a cofactor.

Its subcellular location is the membrane. It catalyses the reaction protoporphyrinogen IX + 3 a menaquinone = protoporphyrin IX + 3 a menaquinol. The catalysed reaction is protoporphyrinogen IX + 3 a ubiquinone = protoporphyrin IX + 3 a ubiquinol. It carries out the reaction protoporphyrinogen IX + 3 a quinone = protoporphyrin IX + 3 a quinol. It functions in the pathway porphyrin-containing compound metabolism; protoporphyrin-IX biosynthesis; protoporphyrin-IX from protoporphyrinogen-IX: step 1/1. In E.coli extracts under anerobic conditions catalyzes the 6-electron oxidation of protoporphyrinogen IX to form protoporphyrin IX, transferring electrons to fumarate reductase, presumably via menaquinone. In vitro under aerobic conditions forms protoporphyrin IX using ubiquinone as an electron acceptor. Complements an E.coli hemG deletion, allowing normal growth in vivo. In Leishmania major, this protein is Protoporphyrinogen IX dehydrogenase [quinone].